The sequence spans 320 residues: Dermonecrotic toxin LarSicTox-alphaIB2a (320 aa).

The signal sequence occupies residues 1-15 (MSHSSTALLHPYVAA). Positions 16-41 (RATEKFAPIYFFCHPLQSAETDVAER) are excised as a propeptide. His-52 is a catalytic residue. Positions 72 and 74 each coordinate Mg(2+). The active-site Nucleophile is the His-88. 2 disulfide bridges follow: Cys-92–Cys-98 and Cys-94–Cys-237. Residue Asp-132 coordinates Mg(2+). A glycan (N-linked (GlcNAc...) asparagine) is linked at Asn-297.

The protein belongs to the arthropod phospholipase D family. Class II subfamily. Requires Mg(2+) as cofactor. Expressed by the venom gland.

Its subcellular location is the secreted. The enzyme catalyses an N-(acyl)-sphingosylphosphocholine = an N-(acyl)-sphingosyl-1,3-cyclic phosphate + choline. The catalysed reaction is an N-(acyl)-sphingosylphosphoethanolamine = an N-(acyl)-sphingosyl-1,3-cyclic phosphate + ethanolamine. It carries out the reaction a 1-acyl-sn-glycero-3-phosphocholine = a 1-acyl-sn-glycero-2,3-cyclic phosphate + choline. It catalyses the reaction a 1-acyl-sn-glycero-3-phosphoethanolamine = a 1-acyl-sn-glycero-2,3-cyclic phosphate + ethanolamine. In terms of biological role, dermonecrotic toxins cleave the phosphodiester linkage between the phosphate and headgroup of certain phospholipids (sphingolipid and lysolipid substrates), forming an alcohol (often choline) and a cyclic phosphate. This toxin acts on sphingomyelin (SM). It may also act on ceramide phosphoethanolamine (CPE), lysophosphatidylcholine (LPC) and lysophosphatidylethanolamine (LPE), but not on lysophosphatidylserine (LPS), and lysophosphatidylglycerol (LPG). It acts by transphosphatidylation, releasing exclusively cyclic phosphate products as second products. Induces dermonecrosis, hemolysis, increased vascular permeability, edema, inflammatory response, and platelet aggregation. This Loxosceles arizonica (Arizona brown spider) protein is Dermonecrotic toxin LarSicTox-alphaIB2a.